Here is a 956-residue protein sequence, read N- to C-terminus: Translation initiation factor IF-2 (956 aa).

Disordered stretches follow at residues 53 to 102 (QFAG…QQEI), 116 to 315 (GKID…NRPA), and 334 to 371 (TLEK…ALDE). A compositionally biased stretch (basic and acidic residues) spans 58–102 (KGNKEASKEVGEEKRKEKEALRVEREKEIEDKRRQEEERQKQQEI). The segment covering 142 to 158 (VTPTQTEKPVQKETVQS) has biased composition (polar residues). The segment covering 166 to 186 (SEEKKVEKPIITEKKEVKAES) has biased composition (basic and acidic residues). Low complexity predominate over residues 197–208 (TDPTTAEETITT). Positions 209–229 (QYQKLSGTTLTGQTIDLSQFN) are enriched in polar residues. Residues 240–257 (ITPNKPGTPGVGNNNNAN) are compositionally biased toward low complexity. Residues 343-352 (GKSKAAKYRR) show a composition bias toward basic residues. The span at 353–371 (DKRETHRQKSDDEQRALDE) shows a compositional bias: basic and acidic residues. One can recognise a tr-type G domain in the interval 454 to 622 (TRAPIVTVMG…KVLLEAEILD (169 aa)). The tract at residues 463–470 (GHVDHGKT) is G1. Position 463 to 470 (463 to 470 (GHVDHGKT)) interacts with GTP. The segment at 488–492 (GITQH) is G2. The interval 510 to 513 (DTPG) is G3. GTP is bound by residues 510–514 (DTPGH) and 564–567 (NKVD). The segment at 564–567 (NKVD) is G4. Residues 600-602 (SAK) form a G5 region.

Belongs to the TRAFAC class translation factor GTPase superfamily. Classic translation factor GTPase family. IF-2 subfamily.

The protein localises to the cytoplasm. Its function is as follows. One of the essential components for the initiation of protein synthesis. Protects formylmethionyl-tRNA from spontaneous hydrolysis and promotes its binding to the 30S ribosomal subunits. Also involved in the hydrolysis of GTP during the formation of the 70S ribosomal complex. This is Translation initiation factor IF-2 from Flavobacterium johnsoniae (strain ATCC 17061 / DSM 2064 / JCM 8514 / BCRC 14874 / CCUG 350202 / NBRC 14942 / NCIMB 11054 / UW101) (Cytophaga johnsonae).